The chain runs to 492 residues: Aspartyl/glutamyl-tRNA(Asn/Gln) amidotransferase subunit B (492 aa).

The protein belongs to the GatB/GatE family. GatB subfamily. Heterotrimer of A, B and C subunits.

It catalyses the reaction L-glutamyl-tRNA(Gln) + L-glutamine + ATP + H2O = L-glutaminyl-tRNA(Gln) + L-glutamate + ADP + phosphate + H(+). The enzyme catalyses L-aspartyl-tRNA(Asn) + L-glutamine + ATP + H2O = L-asparaginyl-tRNA(Asn) + L-glutamate + ADP + phosphate + 2 H(+). In terms of biological role, allows the formation of correctly charged Asn-tRNA(Asn) or Gln-tRNA(Gln) through the transamidation of misacylated Asp-tRNA(Asn) or Glu-tRNA(Gln) in organisms which lack either or both of asparaginyl-tRNA or glutaminyl-tRNA synthetases. The reaction takes place in the presence of glutamine and ATP through an activated phospho-Asp-tRNA(Asn) or phospho-Glu-tRNA(Gln). This chain is Aspartyl/glutamyl-tRNA(Asn/Gln) amidotransferase subunit B, found in Pelagibacter ubique (strain HTCC1062).